Reading from the N-terminus, the 284-residue chain is NH(3)-dependent NAD(+) synthetase (284 aa).

41 to 48 contacts ATP; sequence GLSGGVDS. Position 47 (aspartate 47) interacts with Mg(2+). Position 127 (arginine 127) interacts with deamido-NAD(+). An ATP-binding site is contributed by threonine 147. Mg(2+) is bound at residue glutamate 152. Position 167 (aspartate 167) interacts with deamido-NAD(+). 2 residues coordinate ATP: lysine 176 and serine 199. Residues 264 to 284 form a disordered region; that stretch reads FKRRPAPGLDLPEPEDPAMSG. Acidic residues predominate over residues 275 to 284; sequence PEPEDPAMSG.

It belongs to the NAD synthetase family. As to quaternary structure, homodimer.

The catalysed reaction is deamido-NAD(+) + NH4(+) + ATP = AMP + diphosphate + NAD(+) + H(+). The protein operates within cofactor biosynthesis; NAD(+) biosynthesis; NAD(+) from deamido-NAD(+) (ammonia route): step 1/1. Functionally, catalyzes the ATP-dependent amidation of deamido-NAD to form NAD. Uses ammonia as a nitrogen source. In Methanopyrus kandleri (strain AV19 / DSM 6324 / JCM 9639 / NBRC 100938), this protein is NH(3)-dependent NAD(+) synthetase.